Consider the following 350-residue polypeptide: Heme A synthase (350 aa).

8 helical membrane-spanning segments follow: residues Leu16–Ile36, Phe77–Trp97, His101–Ile121, Leu136–Val156, Leu170–Leu190, Gly201–Ala221, Val265–Val285, and Ile299–Ala321. His272 is a binding site for heme. A heme-binding site is contributed by His328.

The protein belongs to the COX15/CtaA family. Type 2 subfamily. As to quaternary structure, interacts with CtaB. It depends on heme b as a cofactor.

The protein resides in the cell membrane. It catalyses the reaction Fe(II)-heme o + 2 A + H2O = Fe(II)-heme a + 2 AH2. Its pathway is porphyrin-containing compound metabolism; heme A biosynthesis; heme A from heme O: step 1/1. Its function is as follows. Catalyzes the conversion of heme O to heme A by two successive hydroxylations of the methyl group at C8. The first hydroxylation forms heme I, the second hydroxylation results in an unstable dihydroxymethyl group, which spontaneously dehydrates, resulting in the formyl group of heme A. The protein is Heme A synthase of Novosphingobium aromaticivorans (strain ATCC 700278 / DSM 12444 / CCUG 56034 / CIP 105152 / NBRC 16084 / F199).